The chain runs to 879 residues: Phosphoenolpyruvate carboxylase (879 aa).

Residues H138 and K546 contribute to the active site.

It belongs to the PEPCase type 1 family. It depends on Mg(2+) as a cofactor.

It carries out the reaction oxaloacetate + phosphate = phosphoenolpyruvate + hydrogencarbonate. Its function is as follows. Forms oxaloacetate, a four-carbon dicarboxylic acid source for the tricarboxylic acid cycle. The polypeptide is Phosphoenolpyruvate carboxylase (Pectobacterium atrosepticum (strain SCRI 1043 / ATCC BAA-672) (Erwinia carotovora subsp. atroseptica)).